The sequence spans 205 residues: Small ribosomal subunit protein uS4c (205 aa).

The S4 RNA-binding domain occupies 93 to 154 (MRLDNTIFRL…RTQTIALIQQ (62 aa)).

This sequence belongs to the universal ribosomal protein uS4 family. In terms of assembly, part of the 30S ribosomal subunit. Contacts protein S5. The interaction surface between S4 and S5 is involved in control of translational fidelity.

It is found in the plastid. The protein localises to the chloroplast. Its function is as follows. One of the primary rRNA binding proteins, it binds directly to 16S rRNA where it nucleates assembly of the body of the 30S subunit. In terms of biological role, with S5 and S12 plays an important role in translational accuracy. In Chaetosphaeridium globosum (Charophycean green alga), this protein is Small ribosomal subunit protein uS4c (rps4).